Reading from the N-terminus, the 480-residue chain is Cysteine--tRNA ligase (480 aa).

Zn(2+) is bound at residue cysteine 27. The 'HIGH' region signature appears at 29-39 (PTVYNYAHIGN). Zn(2+) is bound by residues cysteine 221, histidine 246, and glutamate 250. The 'KMSKS' region signature appears at 278-282 (KMSKS). Lysine 281 serves as a coordination point for ATP.

The protein belongs to the class-I aminoacyl-tRNA synthetase family. As to quaternary structure, monomer. The cofactor is Zn(2+).

The protein localises to the cytoplasm. It carries out the reaction tRNA(Cys) + L-cysteine + ATP = L-cysteinyl-tRNA(Cys) + AMP + diphosphate. In Borrelia garinii subsp. bavariensis (strain ATCC BAA-2496 / DSM 23469 / PBi) (Borreliella bavariensis), this protein is Cysteine--tRNA ligase.